The primary structure comprises 370 residues: Allatostatins (370 aa).

The signal sequence occupies residues 1–27 (MSGPRTCFCLPSALVLVLLSLSTSALG). Residues 28–65 (TAPEPSGVHEESPAGGGTDLLPHPEDLSASDNPDLEFV) constitute a propeptide that is removed on maturation. The tract at residues 29 to 58 (APEPSGVHEESPAGGGTDLLPHPEDLSASD) is disordered. 4 positions are modified to leucine amide: leucine 73, leucine 94, leucine 105, and leucine 117. Residues 121-151 (DYDYYGEEDEDDQQAIGDEDIEESDVGDLMD) constitute a propeptide that is removed on maturation. A leucine amide mark is found at leucine 161, leucine 172, leucine 188, leucine 200, leucine 213, and leucine 232. A propeptide spanning residues 236 to 251 (SDDIDFRELEEKFAED) is cleaved from the precursor. Position 264 is a leucine amide (leucine 264). A propeptide spanning residues 268-345 (EVEPSELEAV…ITPEEFSRMV (78 aa)) is cleaved from the precursor. A disordered region spans residues 273–298 (ELEAVRNEEKDNSSVHDKKNNTNDMH). Leucine amide is present on leucine 353. An Isoleucine amide modification is found at isoleucine 364. The propeptide occupies 368–370 (SER).

The protein belongs to the allatostatin family. As to expression, brain, subesophageal ganglion and corpus allatum.

It is found in the secreted. In terms of biological role, neuropeptide inhibitors of juvenile hormone synthesis and gut muscle contraction. This Diploptera punctata (Pacific beetle cockroach) protein is Allatostatins.